The following is a 157-amino-acid chain: Endoribonuclease YbeY (157 aa).

Zn(2+) contacts are provided by His123, His127, and His133.

This sequence belongs to the endoribonuclease YbeY family. Zn(2+) is required as a cofactor.

The protein resides in the cytoplasm. Single strand-specific metallo-endoribonuclease involved in late-stage 70S ribosome quality control and in maturation of the 3' terminus of the 16S rRNA. The polypeptide is Endoribonuclease YbeY (Desulfitobacterium hafniense (strain Y51)).